We begin with the raw amino-acid sequence, 155 residues long: S-ribosylhomocysteine lyase (155 aa).

Fe cation contacts are provided by H53, H57, and C121.

It belongs to the LuxS family. Homodimer. Requires Fe cation as cofactor.

The enzyme catalyses S-(5-deoxy-D-ribos-5-yl)-L-homocysteine = (S)-4,5-dihydroxypentane-2,3-dione + L-homocysteine. Its function is as follows. Involved in the synthesis of autoinducer 2 (AI-2) which is secreted by bacteria and is used to communicate both the cell density and the metabolic potential of the environment. The regulation of gene expression in response to changes in cell density is called quorum sensing. Catalyzes the transformation of S-ribosylhomocysteine (RHC) to homocysteine (HC) and 4,5-dihydroxy-2,3-pentadione (DPD). The chain is S-ribosylhomocysteine lyase from Thermus thermophilus (strain ATCC BAA-163 / DSM 7039 / HB27).